The primary structure comprises 490 residues: Prostaglandin E2 receptor EP4 subtype (490 aa).

Residues 1–19 (MSTPGVNASASLSPDRLNS) are Extracellular-facing. The N-linked (GlcNAc...) asparagine glycan is linked to Asn-7. A helical transmembrane segment spans residues 20–43 (PVTIPAVMFIFGVVGNLVAIVVLC). The Cytoplasmic segment spans residues 44 to 55 (KSRKEQKETTFY). Residues 56-79 (TLVCGLAVTDLLGTLLVSPVTIAT) traverse the membrane as a helical segment. Topologically, residues 80-96 (YMKGQWPGGQPLCEYST) are extracellular. A disulfide bridge connects residues Cys-92 and Cys-170. A helical transmembrane segment spans residues 97–115 (FILLFFSLSGLSIICAMSV). At 116–135 (ERYLAINHAYFYSHYVDKRL) the chain is on the cytoplasmic side. Residues 136–160 (AGLTLFAVYASNVLFCALPNMGLGS) form a helical membrane-spanning segment. Residues 161 to 184 (SRLQYPDTWCFIDWTTNVTAHAAY) are Extracellular-facing. The chain crosses the membrane as a helical span at residues 185 to 211 (SYMYAGFSSFLILATVLCNVLVCGALL). Residues 212 to 269 (RMHRQFMRRTSLGTEQHHAAAAAVTSVASRGHPAASPALPRLSDFRRRRSFRRIAGAE) are Cytoplasmic-facing. Residues 270 to 297 (IQMVILLIATSLVVLICSIPLVVRVFVN) traverse the membrane as a helical segment. The Extracellular portion of the chain corresponds to 298–314 (QLYQPSLEREVSKNPDL). The chain crosses the membrane as a helical span at residues 315 to 334 (QAIRIASVNPILDPWIYILL). Over 335–490 (RKTVLSKAIE…ETLNLSEKCI (156 aa)) the chain is Cytoplasmic. Residues 359-378 (ERSGQHCSDSQRTSSAMSGH) are disordered. A compositionally biased stretch (polar residues) spans 363–378 (QHCSDSQRTSSAMSGH). A phosphoserine mark is found at Ser-376, Ser-379, Ser-381, and Ser-384. The segment covering 439-451 (SETSDSSQGQDSE) has biased composition (polar residues). The tract at residues 439 to 477 (SETSDSSQGQDSESVLLVDEAGGSGRAGPAPKGSSLQVT) is disordered.

Belongs to the G-protein coupled receptor 1 family. As to quaternary structure, interacts with FEM1A. Post-translationally, phosphorylation mediates agonist-mediated desensitization by promoting cytoplasmic retention.

Its subcellular location is the cell membrane. Receptor for prostaglandin E2 (PGE2). The activity of this receptor is mediated by G(s) proteins that stimulate adenylate cyclase. Has a relaxing effect on smooth muscle. May play an important role in regulating renal hemodynamics, intestinal epithelial transport, adrenal aldosterone secretion, and uterine function. This Pan troglodytes (Chimpanzee) protein is Prostaglandin E2 receptor EP4 subtype (PTGER4).